The following is a 298-amino-acid chain: Glycine--tRNA ligase alpha subunit (298 aa).

It belongs to the class-II aminoacyl-tRNA synthetase family. As to quaternary structure, tetramer of two alpha and two beta subunits.

The protein localises to the cytoplasm. It catalyses the reaction tRNA(Gly) + glycine + ATP = glycyl-tRNA(Gly) + AMP + diphosphate. The chain is Glycine--tRNA ligase alpha subunit from Gloeothece citriformis (strain PCC 7424) (Cyanothece sp. (strain PCC 7424)).